Here is a 923-residue protein sequence, read N- to C-terminus: Protocadherin gamma-B4 (923 aa).

Residues Met-1–Cys-30 form the signal peptide. 6 Cadherin domains span residues Glu-31–Phe-133, Thr-134–Phe-242, Ser-243–Val-345, Ile-346–Phe-450, Ser-451–Val-560, and Asp-568–Ile-673. At Glu-31 to Tyr-689 the chain is on the extracellular side. Residues Asn-417 and Asn-543 are each glycosylated (N-linked (GlcNAc...) asparagine). The chain crosses the membrane as a helical span at residues Leu-690–Ala-710. The Cytoplasmic portion of the chain corresponds to Leu-711–Lys-923. 2 disordered regions span residues Ser-797–Asn-832 and Ala-893–Lys-923. Over residues Asn-913–Lys-923 the composition is skewed to basic residues.

The protein resides in the cell membrane. Its function is as follows. Potential calcium-dependent cell-adhesion protein. May be involved in the establishment and maintenance of specific neuronal connections in the brain. This is Protocadherin gamma-B4 (PCDHGB4) from Pan troglodytes (Chimpanzee).